A 312-amino-acid polypeptide reads, in one-letter code: Very long chain fatty acid elongase 4 (312 aa).

N-linked (GlcNAc...) asparagine glycosylation occurs at Asn-20. 7 consecutive transmembrane segments (helical) span residues Leu-42–Leu-62, Val-78–Phe-98, Ala-127–Leu-147, Met-165–Ala-185, Asn-188–Ile-208, Tyr-217–Leu-237, and Trp-246–Tyr-266. Residues Pro-273–Asn-292 are compositionally biased toward polar residues. Residues Pro-273–Glu-312 form a disordered region. Asn-292 is a glycosylation site (N-linked (GlcNAc...) asparagine). The Di-lysine motif motif lies at Lys-308–Glu-312.

The protein belongs to the ELO family. ELOVL4 subfamily. In terms of assembly, oligomer. N-glycosylated. As to expression, expressed in the retina, exclusively in photoreceptor cells and in the brain, skin, testis and lens.

The protein resides in the endoplasmic reticulum membrane. The catalysed reaction is a very-long-chain acyl-CoA + malonyl-CoA + H(+) = a very-long-chain 3-oxoacyl-CoA + CO2 + CoA. It carries out the reaction hexacosanoyl-CoA + malonyl-CoA + H(+) = 3-oxooctacosanyol-CoA + CO2 + CoA. It catalyses the reaction octacosanoyl-CoA + malonyl-CoA + H(+) = 3-oxo-triacontanoyl-CoA + CO2 + CoA. The enzyme catalyses triacontanoyl-CoA + malonyl-CoA + H(+) = 3-oxo-dotriacontanoyl-CoA + CO2 + CoA. The catalysed reaction is (19Z,22Z,25Z,28Z,31Z)-tetratriacontapentaenoyl-CoA + malonyl-CoA + H(+) = 3-oxo-(21Z,24Z,27Z,30Z,33Z)-hexatriacontapentaenoyl-CoA + CO2 + CoA. It carries out the reaction (4Z,7Z,10Z,13Z,16Z,19Z)-docosahexaenoyl-CoA + malonyl-CoA + H(+) = 3-oxo-(6Z,9Z,12Z,15Z,18Z,21Z)-tetracosahexaenoyl-CoA + CO2 + CoA. It catalyses the reaction (7Z,10Z,13Z,16Z)-docosatetraenoyl-CoA + malonyl-CoA + H(+) = (9Z,12Z,15Z,18Z)-3-oxotetracosatetraenoyl-CoA + CO2 + CoA. The enzyme catalyses (11Z,14Z,17Z,20Z,23Z)-hexacosapentaenoyl-CoA + malonyl-CoA + H(+) = 3-oxo-(13Z,16Z,19Z,22Z,25Z)-octacosapentaenoyl-CoA + CO2 + CoA. The catalysed reaction is (13Z,16Z,19Z,22Z,25Z)-octacosapentaenoyl-CoA + malonyl-CoA + H(+) = 3-oxo-(15Z,18Z,21Z,24Z,27Z)-triacontapentaenoyl-CoA + CO2 + CoA. It carries out the reaction (15Z,18Z,21Z,24Z,27Z)-triacontapentaenoyl-CoA + malonyl-CoA + H(+) = 3-oxo-(17Z,20Z,23Z,26Z,29Z)-dotriacontapentaenoyl-CoA + CO2 + CoA. It catalyses the reaction (17Z,20Z,23Z,26Z,29Z)-dotriacontapentaenoyl-CoA + malonyl-CoA + H(+) = 3-oxo-(19Z,22Z,25Z,28Z,31Z)-tetratriacontapentaenoyl-CoA + CO2 + CoA. The enzyme catalyses (21Z,24Z,27Z,30Z,33Z)-hexatriacontapentaenoyl-CoA + malonyl-CoA + H(+) = 3-oxo-(23Z,26Z,29Z,32Z,35Z)-octatriacontapentaenoyl-CoA + CO2 + CoA. The catalysed reaction is (11Z,14Z,17Z,20Z)-hexacosatetraenoyl-CoA + malonyl-CoA + H(+) = (13Z,16Z,19Z,22Z)-3-oxooctacosatetraenoyl-CoA + CO2 + CoA. It carries out the reaction (13Z,16Z,19Z,22Z)-octacosatetraenoyl-CoA + malonyl-CoA + H(+) = 3-oxo-(15Z,18Z,21Z,24Z)-triacontatetraenoyl-CoA + CO2 + CoA. It catalyses the reaction (15Z,18Z,21Z,24Z)-triacontatetraenoyl-CoA + malonyl-CoA + H(+) = 3-oxo-(17Z,20Z,23Z,26Z)-dotriacontatetraenoyl-CoA + CO2 + CoA. The enzyme catalyses (17Z,20Z,23Z,26Z)-dotriacontatetraenoyl-CoA + malonyl-CoA + H(+) = 3-oxo-(19Z,22Z,25Z,28Z)-tetratriacontatetraenoyl-CoA + CO2 + CoA. The catalysed reaction is (19Z,22Z,25Z,28Z)-tetratriacontatetraenoyl-CoA + malonyl-CoA + H(+) = 3-oxo-(21Z,24Z,27Z,30Z)-hexatriacontatetraenoyl-CoA + CO2 + CoA. It carries out the reaction (21Z,24Z,27Z,30Z)-hexatriacontatetraenoyl-CoA + malonyl-CoA + H(+) = 3-oxo-(23Z,26Z,29Z,32Z)-octatriacontatetraenoyl-CoA + CO2 + CoA. It catalyses the reaction (6Z,9Z,12Z,15Z,18Z,21Z)-tetracosahexaenoyl-CoA + malonyl-CoA + H(+) = 3-oxo-(8Z,11Z,14Z,17Z,20Z,23Z)-hexacosahexaenoyl-CoA + CO2 + CoA. The enzyme catalyses (8Z,11Z,14Z,17Z,20Z,23Z)-hexacosahexaenoyl-CoA + malonyl-CoA + H(+) = 3-oxo-(10Z,13Z,16Z,19Z,22Z,25Z)-octacosahexaenoyl-CoA + CO2 + CoA. The catalysed reaction is (10Z,13Z,16Z,19Z,22Z,25Z)-octacosahexaenoyl-CoA + malonyl-CoA + H(+) = 3-oxo-(12Z,15Z,18Z,21Z,24Z,27Z)-triacontahexaenoyl-CoA + CO2 + CoA. It carries out the reaction (12Z,15Z,18Z,21Z,24Z,27Z)-triacontahexaenoyl-CoA + malonyl-CoA + H(+) = 3-oxo-(14Z,17Z,20Z,23Z,26Z,29Z)-dotriacontahexaenoyl-CoA + CO2 + CoA. It catalyses the reaction (14Z,17Z,20Z,23Z,26Z,29Z)-dotriacontahexaenoyl-CoA + malonyl-CoA + H(+) = 3-oxo-(16Z,19Z,22Z,25Z,28Z,31Z)-tetratriacontahexaenoyl-CoA + CO2 + CoA. The enzyme catalyses (16Z,19Z,22Z,25Z,28Z,31Z)-tetratriacontahexaenoyl-CoA + malonyl-CoA + H(+) = 3-oxo-(18Z,21Z,24Z,27Z,30Z,33Z)-hexatriacontahexaenoyl-CoA + CO2 + CoA. The catalysed reaction is (9Z,12Z,15Z,18Z,21Z)-tetracosapentaenoyl-CoA + malonyl-CoA + H(+) = 3-oxo-(11Z,14Z,17Z,20Z,23Z)-hexacosapentaenoyl-CoA + CO2 + CoA. It functions in the pathway lipid metabolism; fatty acid biosynthesis. Catalyzes the first and rate-limiting reaction of the four reactions that constitute the long-chain fatty acids elongation cycle. This endoplasmic reticulum-bound enzymatic process allows the addition of 2 carbons to the chain of long- and very long-chain fatty acids (VLCFAs) per cycle. Condensing enzyme that catalyzes the synthesis of very long chain saturated (VLC-SFA) and polyunsaturated (PUFA) fatty acids that are involved in multiple biological processes as precursors of membrane lipids and lipid mediators. May play a critical role in early brain and skin development. In Mus musculus (Mouse), this protein is Very long chain fatty acid elongase 4.